Reading from the N-terminus, the 294-residue chain is Thymidylate synthase (294 aa).

DUMP is bound by residues R30 and 156–157 (RR). Residue C176 is the Nucleophile of the active site. DUMP-binding positions include 196–199 (RSGD), N207, and 237–239 (HVY). Position 199 (D199) interacts with (6R)-5,10-methylene-5,6,7,8-tetrahydrofolate. A293 serves as a coordination point for (6R)-5,10-methylene-5,6,7,8-tetrahydrofolate.

Belongs to the thymidylate synthase family. As to quaternary structure, homodimer.

The enzyme catalyses dUMP + (6R)-5,10-methylene-5,6,7,8-tetrahydrofolate = 7,8-dihydrofolate + dTMP. Its pathway is pyrimidine metabolism; dTTP biosynthesis. In Ascaris suum (Pig roundworm), this protein is Thymidylate synthase.